The sequence spans 526 residues: Arylsulfatase G (526 aa).

The first 16 residues, methionine 1–serine 16, serve as a signal peptide directing secretion. Ca(2+) contacts are provided by aspartate 44, aspartate 45, and cysteine 84. Catalysis depends on cysteine 84, which acts as the Nucleophile. Residue cysteine 84 is modified to 3-oxoalanine (Cys). Residue asparagine 117 is glycosylated (N-linked (GlcNAc...) asparagine). Lysine 137 is a substrate binding site. Residue histidine 139 is part of the active site. Serine 162 is a substrate binding site. Asparagine 215 carries an N-linked (GlcNAc...) asparagine glycan. Histidine 251 provides a ligand contact to substrate. Ca(2+) is bound by residues aspartate 302 and asparagine 303. N-linked (GlcNAc...) asparagine glycans are attached at residues asparagine 356 and asparagine 497.

It belongs to the sulfatase family. The cofactor is Ca(2+). In terms of processing, N-glycosylated with both high mannose and complex type sugars. Post-translationally, the conversion to 3-oxoalanine (also known as C-formylglycine, FGly), of a serine or cysteine residue in prokaryotes and of a cysteine residue in eukaryotes, is critical for catalytic activity. 63-kDa precursor undergoes proteolytic processing in two steps, yielding two fragments in the first step (apparent molecular masses of 44 and 18 kDa). In the second step, the 44-kDa fragment is processed further to the 34- and 10-kDa chains. The 10-kDa chain is a cleavage product of the 44-kDa fragment but linked to the 18-kDa chain through a disulfide bridge.

It localises to the lysosome. The enzyme catalyses an aryl sulfate + H2O = a phenol + sulfate + H(+). It catalyses the reaction Hydrolysis of the 3-sulfate groups of the N-sulfo-D-glucosamine 3-O-sulfate units of heparin.. Functionally, displays arylsulfatase activity at acidic pH towards the artificial substrate p-nitrocatechol sulfate. Catalyzes the hydrolysis of the 3-sulfate groups of the N-sulfo-D-glucosamine 3-O-sulfate units of heparin. In Rattus norvegicus (Rat), this protein is Arylsulfatase G (Arsg).